The chain runs to 272 residues: Alcohol dehydrogenase-related 31 kDa protein (272 aa).

NAD(+) is bound at residue 11–34 (YVADCGGIALETSKVLMTKNIAKL). Ser-139 lines the substrate pocket. Residue Tyr-152 is the Proton acceptor of the active site.

It belongs to the short-chain dehydrogenases/reductases (SDR) family.

The polypeptide is Alcohol dehydrogenase-related 31 kDa protein (Adhr) (Drosophila melanogaster (Fruit fly)).